The sequence spans 466 residues: Asparagine--tRNA ligase (466 aa).

The protein belongs to the class-II aminoacyl-tRNA synthetase family. As to quaternary structure, homodimer.

Its subcellular location is the cytoplasm. It carries out the reaction tRNA(Asn) + L-asparagine + ATP = L-asparaginyl-tRNA(Asn) + AMP + diphosphate + H(+). In Shigella dysenteriae serotype 1 (strain Sd197), this protein is Asparagine--tRNA ligase.